Consider the following 347-residue polypeptide: Protein RecA (347 aa).

64-71 (GPESSGKT) provides a ligand contact to ATP.

Belongs to the RecA family.

It is found in the cytoplasm. In terms of biological role, can catalyze the hydrolysis of ATP in the presence of single-stranded DNA, the ATP-dependent uptake of single-stranded DNA by duplex DNA, and the ATP-dependent hybridization of homologous single-stranded DNAs. It interacts with LexA causing its activation and leading to its autocatalytic cleavage. This is Protein RecA from Bartonella bacilliformis (strain ATCC 35685 / KC583 / Herrer 020/F12,63).